The chain runs to 175 residues: Nucleoside triphosphate/diphosphate phosphatase (175 aa).

Arg-23 (proton donor) is an active-site residue. Mg(2+)-binding residues include Asn-87, Asp-103, Asp-105, Asp-107, Asp-120, and Glu-123.

The protein belongs to the Ntdp family. Mg(2+) is required as a cofactor.

It carries out the reaction a ribonucleoside 5'-triphosphate + H2O = a ribonucleoside 5'-diphosphate + phosphate + H(+). The enzyme catalyses a ribonucleoside 5'-diphosphate + H2O = a ribonucleoside 5'-phosphate + phosphate + H(+). In terms of biological role, has nucleoside phosphatase activity towards nucleoside triphosphates and nucleoside diphosphates. This chain is Nucleoside triphosphate/diphosphate phosphatase, found in Listeria monocytogenes serotype 4b (strain CLIP80459).